Reading from the N-terminus, the 107-residue chain is Small ribosomal subunit protein uS10m (107 aa).

Belongs to the universal ribosomal protein uS10 family.

The protein resides in the mitochondrion. The chain is Small ribosomal subunit protein uS10m (RPS10) from Prototheca wickerhamii.